We begin with the raw amino-acid sequence, 151 residues long: MFRGTHRHSLDSKGRMNVPARFRDWLNAHCDGQLVVTIDAQSQKGERCLVAYPLPTWEKVERRIAELPSNNPAARQFQRLFVGQSEELRLDAQARILLSPNLRKFAELDKELVLVGQIDKFEIWDAARWDACQETWLSGADGFACLGDLVL.

2 consecutive SpoVT-AbrB domains span residues 5–56 (THRH…PLPT) and 85–128 (SEEL…DAAR).

The protein belongs to the MraZ family. As to quaternary structure, forms oligomers.

It localises to the cytoplasm. It is found in the nucleoid. The polypeptide is Transcriptional regulator MraZ (Acidithiobacillus ferrooxidans (strain ATCC 23270 / DSM 14882 / CIP 104768 / NCIMB 8455) (Ferrobacillus ferrooxidans (strain ATCC 23270))).